The chain runs to 231 residues: Probable transglycosylase SceD (231 aa).

A signal peptide spans 1–27 (MKKTLLASSLAVGLGIVAGNAGHEAHA). Residues 93–153 (SAQAPATNNV…ESKASEGSSV (61 aa)) form a disordered region. Over residues 96 to 116 (APATNNVAPSADQANQVQSQE) the composition is skewed to polar residues. The span at 119–137 (APQNAQTQQPQASTSNNSQ) shows a compositional bias: low complexity. The segment covering 138–153 (VTATPTESKASEGSSV) has biased composition (polar residues).

It belongs to the transglycosylase family. SceD subfamily.

Its subcellular location is the secreted. Is able to cleave peptidoglycan and affects clumping and separation of bacterial cells. The protein is Probable transglycosylase SceD (sceD) of Staphylococcus aureus (strain bovine RF122 / ET3-1).